A 266-amino-acid polypeptide reads, in one-letter code: Protein phosphatase 1 regulatory subunit 35 (266 aa).

Polar residues predominate over residues 1 to 10 (MMVYNGSQLE). Residues 1-118 (MMVYNGSQLE…QDLGTPVQQS (118 aa)) form a disordered region. Over residues 21-38 (PGPPPEPRAPEPGAPVPE) the composition is skewed to pro residues. Phosphoserine occurs at positions 46 and 51. Residues 62–79 (GRRKGRADRRGGARKGRQ) show a composition bias toward basic residues. A compositionally biased stretch (pro residues) spans 86–97 (PPSPVRSGPPPA).

The protein belongs to the PPP1R35 family. As to quaternary structure, interacts with PPP1CA; this interaction mediates the PPP1CA phosphatase activity inhibition. Interacts with RTTN; this interaction allows the mutual recruitment to the centriole.

The protein resides in the cytoplasm. The protein localises to the cytoskeleton. It is found in the microtubule organizing center. It localises to the centrosome. Its subcellular location is the centriole. Functionally, during centriole duplication, plays a role in the centriole elongation by promoting the recruitment of the microtubule-binding elongation machinery through its interaction with RTTN, leading to the centriole to centrosome conversion. In addition may play a role in the primary cilia assembly. The protein is Protein phosphatase 1 regulatory subunit 35 of Bos taurus (Bovine).